A 64-amino-acid chain; its full sequence is Large ribosomal subunit protein bL35 (64 aa).

This sequence belongs to the bacterial ribosomal protein bL35 family.

The polypeptide is Large ribosomal subunit protein bL35 (Acinetobacter baylyi (strain ATCC 33305 / BD413 / ADP1)).